A 252-amino-acid chain; its full sequence is 2-succinyl-6-hydroxy-2,4-cyclohexadiene-1-carboxylate synthase (252 aa).

Belongs to the AB hydrolase superfamily. MenH family. In terms of assembly, monomer.

The enzyme catalyses 5-enolpyruvoyl-6-hydroxy-2-succinyl-cyclohex-3-ene-1-carboxylate = (1R,6R)-6-hydroxy-2-succinyl-cyclohexa-2,4-diene-1-carboxylate + pyruvate. The protein operates within quinol/quinone metabolism; 1,4-dihydroxy-2-naphthoate biosynthesis; 1,4-dihydroxy-2-naphthoate from chorismate: step 3/7. Its pathway is quinol/quinone metabolism; menaquinone biosynthesis. Its function is as follows. Catalyzes a proton abstraction reaction that results in 2,5-elimination of pyruvate from 2-succinyl-5-enolpyruvyl-6-hydroxy-3-cyclohexene-1-carboxylate (SEPHCHC) and the formation of 2-succinyl-6-hydroxy-2,4-cyclohexadiene-1-carboxylate (SHCHC). The chain is 2-succinyl-6-hydroxy-2,4-cyclohexadiene-1-carboxylate synthase from Escherichia coli O17:K52:H18 (strain UMN026 / ExPEC).